Consider the following 118-residue polypeptide: uncharacterized protein (118 aa).

This is an uncharacterized protein from Caenorhabditis elegans.